A 305-amino-acid polypeptide reads, in one-letter code: NK1 transcription factor-related protein 2 (305 aa).

2 disordered regions span residues 51–158 and 210–257; these read EEVE…KPRR and KWKK…PGAL. The span at 87 to 96 shows a compositional bias: acidic residues; the sequence is SEAEEEEEAE. The segment covering 97–115 has biased composition (basic and acidic residues); sequence DAGRAHQPERWQGVHEGSP. The span at 129–140 shows a compositional bias: low complexity; sequence AEGLPASPGSPG. Residues 156 to 215 constitute a DNA-binding region (homeobox); the sequence is PRRARTAFTYEQLVALENKFRATRYLSVCERLNLALSLSLTETQVKIWFQNRRTKWKKQN.

The protein belongs to the NK-1 homeobox family. In terms of assembly, interacts (via the homeodomain) with HIPK1, HIPK2, and HIPK3. Phosphorylated by HIPK2 in vitro. Expression detected in the brain, testis and spleen. In the testis, expressed in the germ cells of the seminiferous epithelium, predominantly in elongating spermatids and spermatozoa. Expressed throughout the brain with highest levels in regions of the cerebral cortex, hippocampus, diencephalon, pons, medulla and cerebellum.

The protein resides in the nucleus. It is found in the nucleolus. Functionally, transcriptional repressor. May play a role in early development as a Wnt/beta-catenin effector, hence controlling pluripotency and preimplantation development of embryonic stem cells. May promote adipogenesis in mesenchymal stem cells, possibly by inhibiting the expression of the antiadipogenic factor NR2F2. May inhibit osteoblastogenic differentiation. This chain is NK1 transcription factor-related protein 2 (Nkx1-2), found in Mus musculus (Mouse).